Consider the following 448-residue polypeptide: Maltoporin (448 aa).

Positions 1–25 (MMITLRKLPLAVAVMAGIFAAQASA) are cleaved as a signal peptide.

It belongs to the porin LamB (TC 1.B.3) family. As to quaternary structure, homotrimer formed of three 18-stranded antiparallel beta-barrels, containing three independent channels.

The protein resides in the cell outer membrane. It carries out the reaction beta-maltose(in) = beta-maltose(out). Involved in the transport of maltose and maltodextrins. The polypeptide is Maltoporin (Cronobacter sakazakii (strain ATCC BAA-894) (Enterobacter sakazakii)).